The following is a 202-amino-acid chain: Sperm-specific H1/protamine-like protein type 1 (202 aa).

Residues 1-35 (MPSPSRKSRSRSRSRSKSPKRSPAKKARKTPKKPR) show a composition bias toward basic residues. Disordered regions lie at residues 1–46 (MPSP…PTTL) and 104–202 (KTSA…QFAL). An H15 domain is found at 41-120 (KKPTTLSMIV…GATGSFRVGK (80 aa)). Positions 126–156 (KKAKKAKSPKKKSSKKSKNKSNNAKAKKSPK) are enriched in basic residues. Over residues 177–187 (GARYPFRYQAY) the composition is skewed to low complexity.

In terms of processing, OE1 and OE3 are produced by post-translational cleavage of a common precursor. Sperm.

It is found in the nucleus. The protein resides in the chromosome. Functionally, linker histones are implicated in chromatin remodeling and/or transcriptional regulation during spermiogenesis, the process of spermatid maturation into spermatozoa. Protamines substitute for histones in the chromatin of sperm during the haploid phase of spermatogenesis. They compact sperm DNA into a highly condensed, stable and inactive complex. The sequence is that of Sperm-specific H1/protamine-like protein type 1 from Ostrea edulis (Native oyster).